Here is a 679-residue protein sequence, read N- to C-terminus: Glycine--tRNA ligase beta subunit (679 aa).

This sequence belongs to the class-II aminoacyl-tRNA synthetase family. Tetramer of two alpha and two beta subunits.

It localises to the cytoplasm. It carries out the reaction tRNA(Gly) + glycine + ATP = glycyl-tRNA(Gly) + AMP + diphosphate. The polypeptide is Glycine--tRNA ligase beta subunit (Streptococcus pyogenes serotype M1).